Here is a 236-residue protein sequence, read N- to C-terminus: tRNA (guanine-N(7)-)-methyltransferase (236 aa).

S-adenosyl-L-methionine-binding residues include D35, E60, N87, and D113. The active site involves D113. Substrate-binding residues include K117 and D149. The disordered stretch occupies residues 217–236 (EFEQHWQEIDNPGNAPTPDA).

It belongs to the class I-like SAM-binding methyltransferase superfamily. TrmB family.

It carries out the reaction guanosine(46) in tRNA + S-adenosyl-L-methionine = N(7)-methylguanosine(46) in tRNA + S-adenosyl-L-homocysteine. It functions in the pathway tRNA modification; N(7)-methylguanine-tRNA biosynthesis. Catalyzes the formation of N(7)-methylguanine at position 46 (m7G46) in tRNA. The chain is tRNA (guanine-N(7)-)-methyltransferase from Synechococcus sp. (strain CC9902).